The following is a 575-amino-acid chain: Dual specificity protein phosphatase YVH1 (575 aa).

Residues 185–213 (KHNNNNNNNNNNNNNNNNNNNNNNCCTFK) form a disordered region. Residues 187–208 (NNNNNNNNNNNNNNNNNNNNNN) are compositionally biased toward low complexity. The 153-residue stretch at 283–435 (NYKINQEEDT…LLLYEKMNYT (153 aa)) folds into the Tyrosine-protein phosphatase domain. The active-site Phosphocysteine intermediate is cysteine 379. Residues cysteine 476 and cysteine 530 each coordinate Zn(2+).

The protein belongs to the protein-tyrosine phosphatase family. Non-receptor class dual specificity subfamily. In terms of assembly, interacts with PES. Zn(2+) serves as cofactor.

Its subcellular location is the cytoplasm. It is found in the nucleus. It carries out the reaction O-phospho-L-tyrosyl-[protein] + H2O = L-tyrosyl-[protein] + phosphate. The enzyme catalyses O-phospho-L-seryl-[protein] + H2O = L-seryl-[protein] + phosphate. In terms of biological role, dual specificity protein phosphatase which dephosphorylates both phosphotyrosine and phosphoserine residues. This is Dual specificity protein phosphatase YVH1 from Plasmodium falciparum (isolate 3D7).